The sequence spans 177 residues: Ribosome rescue factor SmrB (177 aa).

The interval 22 to 45 (SKKLRQDTIIHQPSKNFSEQQKQR) is disordered. Residues 30 to 41 (IIHQPSKNFSEQ) show a composition bias toward polar residues. In terms of domain architecture, Smr spans 98 to 173 (LDMHGMKQDE…GAGAILVLLS (76 aa)).

This sequence belongs to the SmrB family. Associates with collided ribosomes, but not with correctly translating polysomes.

Its function is as follows. Acts as a ribosome collision sensor. Detects stalled/collided disomes (pairs of ribosomes where the leading ribosome is stalled and a second ribosome has collided with it) and endonucleolytically cleaves mRNA at the 5' boundary of the stalled ribosome. Stalled/collided disomes form a new interface (primarily via the 30S subunits) that binds SmrB. Cleaved mRNA becomes available for tmRNA ligation, leading to ribosomal subunit dissociation and rescue of stalled ribosomes. The polypeptide is Ribosome rescue factor SmrB (Aliivibrio salmonicida (strain LFI1238) (Vibrio salmonicida (strain LFI1238))).